The primary structure comprises 280 residues: MYIHFPQFSPIIFSIFSIPIRWYGLMYFLAFIFALWRGKTRAEYYNLTQIEVENLLYSCFIGLFIGGRIGYIIFYNPVFFFENMSHILKIWEGGMSFHGGLLGVIIVLLFFSKKLNKHILEISDFIVPLVPFGLGAGRLGNFINGELWGRIAPDFKFSVLFPNSREIDLNVAANNLELKSLIEKFGVLPRHPSQIYEFVLEGLVLFFVLNYFSKKSMPFGFVSSIFLILYGCFRIFLEIFRQPDRQIGLFLNTFSMGQLLSMPMIVLGILIAINIYVKVL.

A run of 3 helical transmembrane segments spans residues 15 to 35 (IFSI…IFAL), 60 to 80 (FIGL…PVFF), and 90 to 110 (IWEG…VLLF). R138 contributes to the a 1,2-diacyl-sn-glycero-3-phospho-(1'-sn-glycerol) binding site. The next 2 membrane-spanning stretches (helical) occupy residues 217 to 237 (MPFG…RIFL) and 257 to 277 (GQLL…NIYV).

It belongs to the Lgt family.

Its subcellular location is the cell membrane. It carries out the reaction L-cysteinyl-[prolipoprotein] + a 1,2-diacyl-sn-glycero-3-phospho-(1'-sn-glycerol) = an S-1,2-diacyl-sn-glyceryl-L-cysteinyl-[prolipoprotein] + sn-glycerol 1-phosphate + H(+). The protein operates within protein modification; lipoprotein biosynthesis (diacylglyceryl transfer). In terms of biological role, catalyzes the transfer of the diacylglyceryl group from phosphatidylglycerol to the sulfhydryl group of the N-terminal cysteine of a prolipoprotein, the first step in the formation of mature lipoproteins. This chain is Phosphatidylglycerol--prolipoprotein diacylglyceryl transferase, found in Buchnera aphidicola subsp. Baizongia pistaciae (strain Bp).